The following is a 251-amino-acid chain: Probable transcriptional regulatory protein NFA_37020 (251 aa).

It belongs to the TACO1 family.

It localises to the cytoplasm. The polypeptide is Probable transcriptional regulatory protein NFA_37020 (Nocardia farcinica (strain IFM 10152)).